Here is a 769-residue protein sequence, read N- to C-terminus: Sensor histidine kinase ComP (769 aa).

Topologically, residues 1–9 (MKNLIKKFT) are cytoplasmic. The chain crosses the membrane as a helical span at residues 10 to 33 (IAVIVLSILYISYTTYISMNGIII). The Extracellular portion of the chain corresponds to 34 to 113 (GTKIHKNDKS…DFDLVTLNRP (80 aa)). The chain crosses the membrane as a helical span at residues 114 to 134 (YSFFLFVLPLFFYFLSIICIF). The Cytoplasmic segment spans residues 135–144 (YILKVNKKRR). A helical membrane pass occupies residues 145 to 167 (SFAAYILILLLLDISIAYISAGG). The Extracellular portion of the chain corresponds to 168 to 235 (PFRGHIINRY…QDYLQVDIDF (68 aa)). A helical transmembrane segment spans residues 236–257 (LATLNLVSFATLTLFSFSAIYL). Residues 258–272 (HLNKYKYAEHSFILK) lie on the Cytoplasmic side of the membrane. The chain crosses the membrane as a helical span at residues 273-295 (LLILTNTLSFAPFLIFFVLPIIF). The Extracellular portion of the chain corresponds to 296–299 (TGNY). Residues 300–323 (IFPALASASLLVLIPFGLVYQFVA) traverse the membrane as a helical segment. The Cytoplasmic segment spans residues 324-337 (NKMFDIEFILGRMR). The helical transmembrane segment at 338 to 357 (YYALLAMIPTLLIVGALVLF) threads the bilayer. Residues 358–361 (DVMD) are Extracellular-facing. Residues 362–383 (IQMNPVRQTVFFFVVMFAVFYF) form a helical membrane-spanning segment. Over 384–769 (KEVMDFKFRL…GFKADIEIEL (386 aa)) the chain is Cytoplasmic. In terms of domain architecture, Histidine kinase spans 571-769 (LARDLHDSVL…GFKADIEIEL (199 aa)). Phosphohistidine; by autocatalysis is present on His-576.

In terms of processing, autophosphorylates on a histidine and transfers the phosphate group onto an aspartate in ComA, thus activating it.

Its subcellular location is the cell membrane. It carries out the reaction ATP + protein L-histidine = ADP + protein N-phospho-L-histidine.. Functionally, sensor in the two-component regulatory system ComP/ComA involved in a major quorum response pathway that regulates the development of genetic competence. Plays a role in sporulation, at least partly interchangeable with that of SpoIIJ. Probably activates ComA by phosphorylation. The polypeptide is Sensor histidine kinase ComP (comP) (Bacillus subtilis (strain 168)).